The chain runs to 150 residues: 3-hydroxyacyl-[acyl-carrier-protein] dehydratase FabZ (150 aa).

His51 is an active-site residue.

This sequence belongs to the thioester dehydratase family. FabZ subfamily.

It is found in the cytoplasm. It catalyses the reaction a (3R)-hydroxyacyl-[ACP] = a (2E)-enoyl-[ACP] + H2O. Involved in unsaturated fatty acids biosynthesis. Catalyzes the dehydration of short chain beta-hydroxyacyl-ACPs and long chain saturated and unsaturated beta-hydroxyacyl-ACPs. This chain is 3-hydroxyacyl-[acyl-carrier-protein] dehydratase FabZ, found in Geobacter metallireducens (strain ATCC 53774 / DSM 7210 / GS-15).